Here is a 126-residue protein sequence, read N- to C-terminus: MLTDPIADMLTRIRNAHLALHKEVSVPRSKMKESLAAILKQEGYIEDVATEEGSIKLTLKYFKGKPVISGLKRVSKPGRRVYVGMHEIPKVQNGLGICILSTSRGVMDGNSAHESKVGGELLCEIW.

The protein belongs to the universal ribosomal protein uS8 family. As to quaternary structure, part of the 30S ribosomal subunit. Contacts proteins S5 and S12.

Functionally, one of the primary rRNA binding proteins, it binds directly to 16S rRNA central domain where it helps coordinate assembly of the platform of the 30S subunit. In Nitratidesulfovibrio vulgaris (strain ATCC 29579 / DSM 644 / CCUG 34227 / NCIMB 8303 / VKM B-1760 / Hildenborough) (Desulfovibrio vulgaris), this protein is Small ribosomal subunit protein uS8.